The chain runs to 663 residues: Alpha-amylase MalA (663 aa).

Disordered stretches follow at residues 1–28 and 80–135; these read MHHP…PTAT and GTLE…LTLR. A compositionally biased stretch (gly residues) spans 92–111; sequence RSGGHSGGVSGGRSGPGRSG. Catalysis depends on Asp-411, which acts as the Nucleophile. Residue Glu-440 is the Proton donor of the active site.

Belongs to the glycosyl hydrolase 13 family.

Its subcellular location is the cytoplasm. It carries out the reaction Endohydrolysis of (1-&gt;4)-alpha-D-glucosidic linkages in polysaccharides containing three or more (1-&gt;4)-alpha-linked D-glucose units.. The protein operates within glycan degradation; starch degradation. Stable and active over a broad range of NaCl concentrations (0.5 to 4.2 M NaCl), with maximal activity at 2.6 M NaCl. 83% and 94% of the maximum activity at 0.6 and 4.2 M NaCl, respectively. Active and stable also in KCl. Its function is as follows. Alpha-amylase that cleaves starch into oligosaccharides, the first step in starch degradation. Endo-acting enzyme which prefers a linear polysaccharide to branched polysaccharides hydrolyzing alpha-1,4 glucosidic bonds efficiently. Also has transglycosylation activity, but does not act on alpha-1,6 bonds. Higher activities of 100%, 79% and 67.8% against amylose, soluble starch and amylopectin, respectively. Lower activity of 22% against glycogen and faint or no activity against alpha-, beta- and gamma-cyclodextrin. This is Alpha-amylase MalA from Haloarcula japonica (strain ATCC 49778 / DSM 6131 / JCM 7785 / NBRC 101032 / NCIMB 13157 / TR-1).